The chain runs to 190 residues: MKKLFLIIGAPGSGKTTDAQIIARDNADSIVHYSTGDLLREEVASGSEYGKTIDSFISKGNLVPLDIVVGTIINAIANAPKDVIIIDGYPRSIEQMEALDEKLKAQNQVQLVSVIEVEVSESVARERVLGRARGADDNVEVFNNRMQVYLTPLKDIETFYSKQKVLHKINGERMIEEIVSEMESFIKGKM.

An ATP-binding site is contributed by 12–17 (GSGKTT). An NMP region spans residues 34–63 (STGDLLREEVASGSEYGKTIDSFISKGNLV). Residues Thr-35, Arg-40, 61 to 63 (NLV), 88 to 91 (GYPR), and Gln-95 each bind AMP. Positions 130-136 (GRARGAD) are LID. Arg-131 provides a ligand contact to ATP. AMP-binding residues include Arg-133 and Arg-145. Residue Arg-173 coordinates ATP.

It belongs to the adenylate kinase family. As to quaternary structure, monomer.

The protein localises to the cytoplasm. It catalyses the reaction AMP + ATP = 2 ADP. Its pathway is purine metabolism; AMP biosynthesis via salvage pathway; AMP from ADP: step 1/1. Its function is as follows. Catalyzes the reversible transfer of the terminal phosphate group between ATP and AMP. Plays an important role in cellular energy homeostasis and in adenine nucleotide metabolism. This Helicobacter hepaticus (strain ATCC 51449 / 3B1) protein is Adenylate kinase.